The following is a 451-amino-acid chain: Gamma-aminobutyric acid receptor subunit alpha-2 (451 aa).

The signal sequence occupies residues 1–28; that stretch reads MKTKLNSSNMQLLLFVFLAWDPARLVLA. Topologically, residues 29-249 are extracellular; sequence NIQEDEAKNN…MTAHFHLKRK (221 aa). N-linked (GlcNAc...) asparagine glycosylation is present at N38. R94 contacts 4-aminobutanoate. N138 carries N-linked (GlcNAc...) asparagine glycosylation. T157 contributes to the 4-aminobutanoate binding site. C166 and C180 are oxidised to a cystine. A glycan (N-linked (GlcNAc...) asparagine) is linked at N201. The chain crosses the membrane as a helical span at residues 250-270; sequence IGYFVIQTYLPCIMTVILSQV. The Cytoplasmic portion of the chain corresponds to 271–280; that stretch reads SFWLNRESVP. A helical transmembrane segment spans residues 281-300; it reads ARTVFGVTTVLTMTTLSISA. The Extracellular segment spans residues 301–311; that stretch reads RNSLPKVAYAT. A helical transmembrane segment spans residues 312-332; it reads AMDWFIAVCYAFVFSALIEFA. The Cytoplasmic portion of the chain corresponds to 333–420; sequence TVNYFTKRGW…FNSVSKIDRM (88 aa). The helical transmembrane segment at 421–441 threads the bilayer; that stretch reads SRIVFPVLFGTFNLVYWATYL. The Extracellular portion of the chain corresponds to 442–451; it reads NREPVLGVSP.

This sequence belongs to the ligand-gated ion channel (TC 1.A.9) family. Gamma-aminobutyric acid receptor (TC 1.A.9.5) subfamily. GABRA2 sub-subfamily. As to quaternary structure, heteropentamer, formed by a combination of alpha (GABRA1-6), beta (GABRB1-3), gamma (GABRG1-3), delta (GABRD), epsilon (GABRE), rho (GABRR1-3), pi (GABRP) and theta (GABRQ) subunits, each subunit exhibiting distinct physiological and pharmacological properties. Interacts with UBQLN1. Interacts with KIF21B. Interacts with LHFPL4. Interacts with SHISA7; interaction leads to the regulation of GABA(A) receptor trafficking, channel deactivation kinetics and pharmacology. Post-translationally, glycosylated.

It is found in the postsynaptic cell membrane. The protein resides in the cell membrane. It localises to the cytoplasmic vesicle membrane. The protein localises to the cell projection. Its subcellular location is the dendrite. The catalysed reaction is chloride(in) = chloride(out). With respect to regulation, activated by pentobarbital. Inhibited by the antagonist bicuculline. Alpha subunit of the heteropentameric ligand-gated chloride channel gated by gamma-aminobutyric acid (GABA), a major inhibitory neurotransmitter in the brain. GABA-gated chloride channels, also named GABA(A) receptors (GABAAR), consist of five subunits arranged around a central pore and contain GABA active binding site(s) located at the alpha and beta subunit interface(s). When activated by GABA, GABAARs selectively allow the flow of chloride anions across the cell membrane down their electrochemical gradient. Chloride influx into the postsynaptic neuron following GABAAR opening decreases the neuron ability to generate a new action potential, thereby reducing nerve transmission. The alpha-2 subunit exhibits synaptogenic activity together with beta-2 and very little to no activity together with beta-3, the gamma-2 subunit being necessary but not sufficient to induce rapid synaptic contacts formation. The chain is Gamma-aminobutyric acid receptor subunit alpha-2 (GABRA2) from Bos taurus (Bovine).